The sequence spans 131 residues: UPF0102 protein YraN (131 aa).

Polar residues predominate over residues 1–19 (MATVPTRSGSPRQLTTKQT). The segment at 1 to 20 (MATVPTRSGSPRQLTTKQTG) is disordered.

It belongs to the UPF0102 family.

The protein is UPF0102 protein YraN of Escherichia coli O157:H7.